The sequence spans 197 residues: Recombination protein RecR (197 aa).

A C4-type zinc finger spans residues 57-72; the sequence is CSICFAITEDDPCAIC. One can recognise a Toprim domain in the interval 79–174; sequence GTICVVENSQ…RISRLAHGIP (96 aa).

The protein belongs to the RecR family.

Functionally, may play a role in DNA repair. It seems to be involved in an RecBC-independent recombinational process of DNA repair. It may act with RecF and RecO. The protein is Recombination protein RecR of Pelobacter propionicus (strain DSM 2379 / NBRC 103807 / OttBd1).